The sequence spans 1229 residues: Chitin synthase 4 (1229 aa).

Residues 1-196 (MSLPERPGAK…IVKEGKRKEK (196 aa)) are disordered. Topologically, residues 1–202 (MSLPERPGAK…RKEKIPEQLR (202 aa)) are cytoplasmic. Positions 18 to 27 (SYRKSPSRRN) are enriched in basic residues. Positions 43-66 (GQHQRGPSVNSFAETIRSPNSNIE) are enriched in polar residues. The span at 92–105 (IRPERNRIDRDHPN) shows a compositional bias: basic and acidic residues. The segment covering 137-150 (SGPPSGSNSASGSG) has biased composition (low complexity). Basic and acidic residues-rich tracts occupy residues 164 to 177 (SGRE…DNTR) and 187 to 196 (IVKEGKRKEK). A helical membrane pass occupies residues 203 to 223 (PPSAWNVYCAVITFWSPDFIM). Residues 224–240 (KCCGMPAKAQRRAWREK) lie on the Extracellular side of the membrane. The chain crosses the membrane as a helical span at residues 241 to 261 (IGLISLILIIMGVVGFLTFGF). The Cytoplasmic segment spans residues 262–495 (NQAVCGGPVL…IKVGTVDTDT (234 aa)). A helical membrane pass occupies residues 496 to 516 (VGCIAAKVVLYVSLALILSVV). At 517–1054 (GARFTLALIF…LCGTFCFSMQ (538 aa)) the chain is on the extracellular side. Disordered regions lie at residues 539–589 (TSQT…RSSF) and 601–648 (GAER…DPYA). Residues 568–581 (GDVGSSVAGASSSD) show a composition bias toward low complexity. Residues Asn608, Asn635, and Asn1030 are each glycosylated (N-linked (GlcNAc...) asparagine). Positions 608–648 (NKSMPTTMASQASGGYMGPSSTAYRETNESRTSFLKSDPYA) are enriched in polar residues. Residues 1055–1075 (FVIFIELIGTLVLPAAIAFTF) traverse the membrane as a helical segment. Topologically, residues 1076–1088 (YVVIISIINQPPQ) are cytoplasmic. The chain crosses the membrane as a helical span at residues 1089–1109 (IIPLVLLGLILGLPAILIIIT). The Extracellular segment spans residues 1110-1114 (AHSWS). Residues 1115 to 1135 (YVLWMLIYLLSLPVWNFVLPA) form a helical membrane-spanning segment. At 1136–1229 (YAFWKFDDFS…QQYDEYYSDA (94 aa)) the chain is on the cytoplasmic side. A disordered region spans residues 1210–1229 (WASAPPHHHQQQYDEYYSDA).

It belongs to the chitin synthase family. Class IV subfamily.

It localises to the cell membrane. The enzyme catalyses [(1-&gt;4)-N-acetyl-beta-D-glucosaminyl](n) + UDP-N-acetyl-alpha-D-glucosamine = [(1-&gt;4)-N-acetyl-beta-D-glucosaminyl](n+1) + UDP + H(+). Its function is as follows. Polymerizes chitin, a structural polymer of the cell wall and septum, by transferring the sugar moiety of UDP-GlcNAc to the non-reducing end of the growing chitin polymer. Might function as a negative regulator on expression of other CHS genes. The chain is Chitin synthase 4 from Pyricularia oryzae (strain 70-15 / ATCC MYA-4617 / FGSC 8958) (Rice blast fungus).